Reading from the N-terminus, the 229-residue chain is C-&gt;U-editing enzyme APOBEC-1 (229 aa).

In terms of domain architecture, CMP/dCMP-type deaminase spans Val-10–Leu-134. A Zn(2+)-binding site is contributed by His-61. Glu-63 (proton donor) is an active-site residue. 2 residues coordinate Zn(2+): Cys-93 and Cys-96.

This sequence belongs to the cytidine and deoxycytidylate deaminase family. Homodimer. Interacts with A1CF; form an mRNA editing complex. Interacts with RBM47; form an mRNA editing complex. Found in a complex with CELF2/CUGBP2 and A1CF. Interacts with HNRPAB. Interacts with SYNCRIP. The cofactor is Zn(2+). Expressed in the spleen. Expressed at lower level in the kidney, testis, lung, brain and liver.

The protein localises to the cytoplasm. It is found in the nucleus. It catalyses the reaction a cytidine in mRNA + H2O + H(+) = a uridine in mRNA + NH4(+). The enzyme catalyses cytidine(6666) in apoB mRNA + H2O + H(+) = uridine(6666) in apoB mRNA + NH4(+). Its function is as follows. Cytidine deaminase catalyzing the cytidine to uridine postranscriptional editing of a variety of mRNAs. Form complexes with cofactors that confer differential editing activity and selectivity. Responsible for the postranscriptional editing of a CAA codon for Gln to a UAA codon for stop in the apolipoprotein B mRNA. Also involved in CGA (Arg) to UGA (Stop) editing in the NF1 mRNA. May also play a role in the epigenetic regulation of gene expression by participating in DNA demethylation. The sequence is that of C-&gt;U-editing enzyme APOBEC-1 from Mus musculus (Mouse).